Reading from the N-terminus, the 158-residue chain is Non-secretory ribonuclease (158 aa).

The N-terminal stretch at 1 to 27 is a signal peptide; sequence MVPKLFTSQICLLLLLGLLGVEGSLHA. His42 functions as the Proton acceptor in the catalytic mechanism. Intrachain disulfides connect Cys50–Cys110, Cys64–Cys121, Cys82–Cys136, and Cys89–Cys98. The residue at position 60 (Tyr60) is a 3'-nitrotyrosine. A substrate-binding site is contributed by 65 to 69; the sequence is KNQNT. Asn86, Asn92, and Asn111 each carry an N-linked (GlcNAc...) asparagine glycan. His153 acts as the Proton donor in catalysis.

It belongs to the pancreatic ribonuclease family. In terms of assembly, interacts with and forms a tight 1:1 complex with RNH1. Dimerization of two such complexes may occur.

It localises to the lysosome. It is found in the cytoplasmic granule. The enzyme catalyses an [RNA] containing cytidine + H2O = an [RNA]-3'-cytidine-3'-phosphate + a 5'-hydroxy-ribonucleotide-3'-[RNA].. It catalyses the reaction an [RNA] containing uridine + H2O = an [RNA]-3'-uridine-3'-phosphate + a 5'-hydroxy-ribonucleotide-3'-[RNA].. In terms of biological role, this is a non-secretory ribonuclease. It is a pyrimidine specific nuclease with a slight preference for U. Cytotoxin and helminthotoxin. Possesses a wide variety of biological activities. This Aotus trivirgatus (Three-striped night monkey) protein is Non-secretory ribonuclease (RNASE2).